Consider the following 320-residue polypeptide: MKTALILLCILGMASAFSMKNFHRRIKAEDSEENGVFKYRPRYFLYKHATYFYPPLKRFPVQGGSDSSEENGDGDSSEEEGEEEETSNEEENNEDSEGNEDQEAEAENATLSGVTASYGVETTADAGKLELAALQLPKKAGDAEGKAPKMKESDEEEEEEEEEENENEEAEVDENEQVVNGTSTNSTEVDGGNGPSGGDNGEEAEEASVTEAGAEGTTAGVRELTSYGTTTAVLLNGFQQTTPPPEAYGTTSPPARKSSTVEYGEEYEQIGNEYNTAYETYDENNGEPRGDTYRAYEDEYSYYKGHGYEGYEGQDYYYHQ.

A signal peptide spans 1-16; the sequence is MKTALILLCILGMASA. A phosphoserine mark is found at serine 31, serine 68, serine 76, serine 77, and serine 96. 3 disordered regions span residues 60 to 117, 136 to 225, and 238 to 264; these read PVQG…VTAS, LPKK…RELT, and FQQTTPPPEAYGTTSPPARKSSTVEYG. Over residues 67-106 the composition is skewed to acidic residues; that stretch reads SSEENGDGDSSEEEGEEEETSNEEENNEDSEGNEDQEAEA. An N-linked (GlcNAc...) asparagine glycan is attached at asparagine 108. Over residues 139 to 152 the composition is skewed to basic and acidic residues; the sequence is KAGDAEGKAPKMKE. Serine 153 is subject to Phosphoserine. Residues 153-176 show a composition bias toward acidic residues; it reads SDEEEEEEEEEENENEEAEVDENE. Polar residues-rich tracts occupy residues 177–188 and 249–261; these read QVVNGTSTNSTE and GTTSPPARKSSTV. N-linked (GlcNAc...) asparagine glycosylation is found at asparagine 180 and asparagine 185. The Integrin-binding motif signature appears at 289 to 291; it reads RGD. Tyrosine 316 and tyrosine 317 each carry sulfotyrosine.

As to quaternary structure, monomer. Interacts with integrins; the interaction promotes cell adhesion.

It is found in the secreted. Its function is as follows. Binds tightly to hydroxyapatite. Appears to form an integral part of the mineralized matrix. Probably important to cell-matrix interaction. Promotes adhesion and migration of various cells via the alpha-V/beta-3 integrin receptor (ITGAV:ITGB3). This is Integrin-binding sialoprotein (Ibsp) from Rattus norvegicus (Rat).